The following is a 42-amino-acid chain: Large ribosomal subunit protein bL36 (42 aa).

Belongs to the bacterial ribosomal protein bL36 family.

In Ehrlichia canis (strain Jake), this protein is Large ribosomal subunit protein bL36.